The sequence spans 633 residues: Threonine--tRNA ligase (633 aa).

Residues 1–61 (MINIHFSNNL…IENCTFEVIT (61 aa)) form the TGS domain. Residues 242–533 (DHRKIGRELE…LIEHHSGKFP (292 aa)) are catalytic. Zn(2+) is bound by residues cysteine 333, histidine 384, and histidine 510.

It belongs to the class-II aminoacyl-tRNA synthetase family. Homodimer. Requires Zn(2+) as cofactor.

It localises to the cytoplasm. The catalysed reaction is tRNA(Thr) + L-threonine + ATP = L-threonyl-tRNA(Thr) + AMP + diphosphate + H(+). In terms of biological role, catalyzes the attachment of threonine to tRNA(Thr) in a two-step reaction: L-threonine is first activated by ATP to form Thr-AMP and then transferred to the acceptor end of tRNA(Thr). Also edits incorrectly charged L-seryl-tRNA(Thr). The protein is Threonine--tRNA ligase of Ehrlichia chaffeensis (strain ATCC CRL-10679 / Arkansas).